The primary structure comprises 402 residues: 26S proteasome regulatory subunit 8 (402 aa).

186-193 is an ATP binding site; that stretch reads GPPGTGKT.

It belongs to the AAA ATPase family.

The protein localises to the cytoplasm. It localises to the nucleus. Its function is as follows. The 26S proteasome is involved in the ATP-dependent degradation of ubiquitinated proteins. The regulatory (or ATPase) complex confers ATP dependency and substrate specificity to the 26S complex. This is 26S proteasome regulatory subunit 8 from Manduca sexta (Tobacco hawkmoth).